Consider the following 926-residue polypeptide: LPS-assembly protein LptD (926 aa).

Residues 1–22 (MALKSPAFRKKFPLLVTGSLLA) form the signal peptide. A disordered region spans residues 58–99 (VDLPPRPVHDTTSVSSNGTVTSQSTSSGEQVAGTQLVTEAKG). Residues 68-85 (TTSVSSNGTVTSQSTSSG) are compositionally biased toward low complexity.

The protein belongs to the LptD family. Component of the lipopolysaccharide transport and assembly complex. Interacts with LptE and LptA.

Its subcellular location is the cell outer membrane. In terms of biological role, together with LptE, is involved in the assembly of lipopolysaccharide (LPS) at the surface of the outer membrane. The chain is LPS-assembly protein LptD from Pseudomonas savastanoi pv. phaseolicola (strain 1448A / Race 6) (Pseudomonas syringae pv. phaseolicola (strain 1448A / Race 6)).